Reading from the N-terminus, the 444-residue chain is Proline--tRNA ligase (444 aa).

This sequence belongs to the class-II aminoacyl-tRNA synthetase family. ProS type 2 subfamily. In terms of assembly, homodimer.

The protein resides in the cytoplasm. The catalysed reaction is tRNA(Pro) + L-proline + ATP = L-prolyl-tRNA(Pro) + AMP + diphosphate. Its function is as follows. Catalyzes the attachment of proline to tRNA(Pro) in a two-step reaction: proline is first activated by ATP to form Pro-AMP and then transferred to the acceptor end of tRNA(Pro). The protein is Proline--tRNA ligase of Pelagibacter ubique (strain HTCC1062).